The primary structure comprises 57 residues: Protein Ric1 (57 aa).

Helical transmembrane passes span 8-28 (IPRLICSVIIPPVGVFFQVGC) and 34-54 (INCLLTVLGYIPGVIHAVYIL).

The protein belongs to the UPF0057 (PMP3) family.

The protein resides in the membrane. This is Protein Ric1 (RIC1) from Phytophthora infestans (Potato late blight agent).